The primary structure comprises 157 residues: Large ribosomal subunit protein uL3 (157 aa).

The segment at 57–98 (GKGFAGSIKRHNQSRGPESHGSRYHRRPGSMGPIKGKLKGKK) is disordered.

This sequence belongs to the universal ribosomal protein uL3 family. Part of the 50S ribosomal subunit. Forms a cluster with proteins L14 and L19.

One of the primary rRNA binding proteins, it binds directly near the 3'-end of the 23S rRNA, where it nucleates assembly of the 50S subunit. The polypeptide is Large ribosomal subunit protein uL3 (rplC) (Onion yellows phytoplasma (strain OY-M)).